An 865-amino-acid chain; its full sequence is DNA topoisomerase 3-beta (865 aa).

Residues 6–151 (RVLMVAEKPS…KVYRARFSSV (146 aa)) enclose the Toprim domain. 3 residues coordinate Mg(2+): Glu-12, Asp-116, and Asp-118. In terms of domain architecture, Topo IA-type catalytic spans 167–587 (NRDEALAVDA…HVIQQFRRKF (421 aa)). The segment at 209–214 (SYGPCQ) is interaction with DNA. Residue Tyr-331 is the O-(5'-phospho-DNA)-tyrosine intermediate of the active site. Basic residues predominate over residues 833-853 (RRGGRGRGRGRGRGRGGRRGS). Residues 833–865 (RRGGRGRGRGRGRGRGGRRGSKSVDPKMSFRDF) are disordered. A compositionally biased stretch (basic and acidic residues) spans 854–865 (KSVDPKMSFRDF).

Belongs to the type IA topoisomerase family. Mg(2+) serves as cofactor.

The enzyme catalyses ATP-independent breakage of single-stranded DNA, followed by passage and rejoining.. In terms of biological role, releases the supercoiling and torsional tension of DNA introduced during the DNA replication and transcription by transiently cleaving and rejoining one strand of the DNA duplex. Introduces a single-strand break via transesterification at a target site in duplex DNA. The scissile phosphodiester is attacked by the catalytic tyrosine of the enzyme, resulting in the formation of a DNA-(5'-phosphotyrosyl)-enzyme intermediate and the expulsion of a 3'-OH DNA strand. The free DNA strand than undergoes passage around the unbroken strand thus removing DNA supercoils. Finally, in the religation step, the DNA 3'-OH attacks the covalent intermediate to expel the active-site tyrosine and restore the DNA phosphodiester backbone. The sequence is that of DNA topoisomerase 3-beta from Arabidopsis thaliana (Mouse-ear cress).